A 407-amino-acid chain; its full sequence is Imidazolonepropionase (407 aa).

Residues H68 and H70 each coordinate Fe(3+). Zn(2+) contacts are provided by H68 and H70. 3 residues coordinate 4-imidazolone-5-propanoate: R77, Y140, and H173. An N-formimidoyl-L-glutamate-binding site is contributed by Y140. H238 is a Fe(3+) binding site. H238 contacts Zn(2+). Position 241 (Q241) interacts with 4-imidazolone-5-propanoate. A Fe(3+)-binding site is contributed by D313. D313 serves as a coordination point for Zn(2+). 2 residues coordinate N-formimidoyl-L-glutamate: N315 and G317. A 4-imidazolone-5-propanoate-binding site is contributed by T318.

The protein belongs to the metallo-dependent hydrolases superfamily. HutI family. Requires Zn(2+) as cofactor. The cofactor is Fe(3+).

Its subcellular location is the cytoplasm. The catalysed reaction is 4-imidazolone-5-propanoate + H2O = N-formimidoyl-L-glutamate. The protein operates within amino-acid degradation; L-histidine degradation into L-glutamate; N-formimidoyl-L-glutamate from L-histidine: step 3/3. Functionally, catalyzes the hydrolytic cleavage of the carbon-nitrogen bond in imidazolone-5-propanoate to yield N-formimidoyl-L-glutamate. It is the third step in the universal histidine degradation pathway. This is Imidazolonepropionase from Burkholderia cenocepacia (strain HI2424).